Here is a 505-residue protein sequence, read N- to C-terminus: Glutamate--tRNA ligase (505 aa).

The short motif at 12 to 22 (PSPTGDPHVGT) is the 'HIGH' region element. Residues 253 to 257 (KLSKR) carry the 'KMSKS' region motif. Lys-256 contributes to the ATP binding site.

This sequence belongs to the class-I aminoacyl-tRNA synthetase family. Glutamate--tRNA ligase type 1 subfamily. As to quaternary structure, monomer.

Its subcellular location is the cytoplasm. It catalyses the reaction tRNA(Glu) + L-glutamate + ATP = L-glutamyl-tRNA(Glu) + AMP + diphosphate. In terms of biological role, catalyzes the attachment of glutamate to tRNA(Glu) in a two-step reaction: glutamate is first activated by ATP to form Glu-AMP and then transferred to the acceptor end of tRNA(Glu). This chain is Glutamate--tRNA ligase, found in Chlamydia pneumoniae (Chlamydophila pneumoniae).